The sequence spans 283 residues: Aspartate dehydrogenase domain-containing protein (283 aa).

Residues S20 and S168 each carry the phosphoserine modification.

This sequence belongs to the L-aspartate dehydrogenase family.

The chain is Aspartate dehydrogenase domain-containing protein from Homo sapiens (Human).